The chain runs to 490 residues: Cytochrome P450 2C14 (490 aa).

Cys435 lines the heme pocket.

It belongs to the cytochrome P450 family. Heme serves as cofactor.

It localises to the endoplasmic reticulum membrane. The protein localises to the microsome membrane. The catalysed reaction is an organic molecule + reduced [NADPH--hemoprotein reductase] + O2 = an alcohol + oxidized [NADPH--hemoprotein reductase] + H2O + H(+). In terms of biological role, cytochromes P450 are a group of heme-thiolate monooxygenases. In liver microsomes, this enzyme is involved in an NADPH-dependent electron transport pathway. It oxidizes a variety of structurally unrelated compounds, including steroids, fatty acids, and xenobiotics. The chain is Cytochrome P450 2C14 (CYP2C14) from Oryctolagus cuniculus (Rabbit).